Consider the following 293-residue polypeptide: Probable xyloglucan endotransglucosylase/hydrolase protein B (293 aa).

Positions M1–C21 are cleaved as a signal peptide. Residues A23–Y220 form the GH16 domain. Catalysis depends on E106, which acts as the Nucleophile. The active-site Proton donor is E110. E110 contacts xyloglucan. A glycan (N-linked (GlcNAc...) asparagine) is linked at N114. Residues Q123–N125, D133–E135, D199–W200, and G204 contribute to the xyloglucan site. 2 disulfide bridges follow: C228-C237 and C274-C287. Xyloglucan is bound at residue R279.

Belongs to the glycosyl hydrolase 16 family. XTH group 1 subfamily. Contains at least one intrachain disulfide bond essential for its enzymatic activity. As to expression, predominantly expressed in the phloem fibers of growing internodes. Weakly or not expressed in the xylem. In the internode, it is expressed closer to the bottom of the internode compared to XTHA.

It is found in the secreted. Its subcellular location is the cell wall. The protein localises to the extracellular space. It localises to the apoplast. It carries out the reaction breaks a beta-(1-&gt;4) bond in the backbone of a xyloglucan and transfers the xyloglucanyl segment on to O-4 of the non-reducing terminal glucose residue of an acceptor, which can be a xyloglucan or an oligosaccharide of xyloglucan.. Functionally, catalyzes xyloglucan endohydrolysis (XEH) and/or endotransglycosylation (XET). Cleaves and religates xyloglucan polymers, an essential constituent of the primary cell wall, and thereby participates in cell wall construction of growing tissues. The polypeptide is Probable xyloglucan endotransglucosylase/hydrolase protein B (XTHB) (Phaseolus angularis (Azuki bean)).